A 127-amino-acid polypeptide reads, in one-letter code: Modulator protein MzrA (127 aa).

Residues 1–9 (MQLPRVTLR) are Cytoplasmic-facing. The helical transmembrane segment at 10–32 (QMTWTTSAIVLLGITLLLWSAFR) threads the bilayer. At 33 to 127 (HQESTLAIRA…LLRDTSHRFG (95 aa)) the chain is on the periplasmic side.

The protein belongs to the MzrA family. Interacts with EnvZ.

Its subcellular location is the cell inner membrane. In terms of biological role, modulates the activity of the EnvZ/OmpR two-component regulatory system, probably by directly modulating EnvZ enzymatic activity and increasing stability of phosphorylated OmpR. The chain is Modulator protein MzrA from Escherichia fergusonii (strain ATCC 35469 / DSM 13698 / CCUG 18766 / IAM 14443 / JCM 21226 / LMG 7866 / NBRC 102419 / NCTC 12128 / CDC 0568-73).